A 332-amino-acid polypeptide reads, in one-letter code: MSYEHCISGYTNFNENIHYFYQFAYLFTAICINYRILYVIWVSQRHFYRNQSFYNLYSVDCFTSVLAMSNELIFTRSFLYFPQLCVSFSEIVKNSPVFMRIYYCLLSYLIAIKPVIHIFIAVNRMSCVMFPVTYSQNWSQKLRIMLIVIFLAPFLVIWNVLISDNFIGYVNGGFGISYTRRVTWASLSLMQFTLIILTVLITMVTTTVTFYKMTTMKKRIKASERALCIAAALISVGFLLEAITQSFFAFFKEAPWLLDVMNYLRFATMDILFVGSPLVLLLVSDQFRGHVLGSRIGRTQRVSSINNTHSHIHHNTHHTMTRYSYFLWNVNK.

A run of 7 helical transmembrane segments spans residues 23–43, 72–92, 101–121, 144–164, 184–204, 231–251, and 263–283; these read FAYL…IWVS, LIFT…SEIV, IYYC…IFIA, IMLI…LISD, WASL…ITMV, AALI…FAFF, and YLRF…LLLV.

It belongs to the nematode receptor-like protein srg family.

The protein localises to the membrane. The protein is Serpentine receptor class gamma-3 (srg-3) of Caenorhabditis elegans.